The chain runs to 210 residues: MQAEGRGTGGSTGDADGPGGPGIPDGPGGNAGGPGEAGATGGRGPRGAGAARASGPRGGAPRGPHGGAASAQDGRCPCGARRPDSRLLELHITMPFSSPMEAELVRRILSRDAAPLPRPGAVLKDFTVSGNLLFMSVRDQDREGAGRMRVVGWGLGSASPEGQKARDLRTPKHKVSEQRPGTPGPPPPEGAQGDGCRGVAFNVMFSAPHI.

2 stretches are compositionally biased toward gly residues: residues M1 to G47 and P56 to G66. Disordered regions lie at residues M1–A80 and G154–R197. Basic and acidic residues predominate over residues Q163–E177.

The protein belongs to the CTAG/PCC1 family. Testis and very low level in placenta and in some uterus samples. Observed in 25-50% of tumor samples of melanomas, non-small-cell lung carcinomas, bladder, prostate and head and neck cancers.

This Homo sapiens (Human) protein is Cancer/testis antigen 2 (CTAG2).